Reading from the N-terminus, the 397-residue chain is Succinate--CoA ligase [ADP-forming] subunit beta (397 aa).

The region spanning 9–254 is the ATP-grasp domain; it reads KALLREFGVP…ESEEDAKEIE (246 aa). ATP-binding positions include lysine 46, 53–55, glutamate 109, serine 112, and glutamate 117; that span reads GRG. 2 residues coordinate Mg(2+): asparagine 209 and aspartate 223. Substrate-binding positions include asparagine 274 and 331–333; that span reads GIM.

The protein belongs to the succinate/malate CoA ligase beta subunit family. In terms of assembly, heterotetramer of two alpha and two beta subunits. It depends on Mg(2+) as a cofactor.

It catalyses the reaction succinate + ATP + CoA = succinyl-CoA + ADP + phosphate. It carries out the reaction GTP + succinate + CoA = succinyl-CoA + GDP + phosphate. The protein operates within carbohydrate metabolism; tricarboxylic acid cycle; succinate from succinyl-CoA (ligase route): step 1/1. In terms of biological role, succinyl-CoA synthetase functions in the citric acid cycle (TCA), coupling the hydrolysis of succinyl-CoA to the synthesis of either ATP or GTP and thus represents the only step of substrate-level phosphorylation in the TCA. The beta subunit provides nucleotide specificity of the enzyme and binds the substrate succinate, while the binding sites for coenzyme A and phosphate are found in the alpha subunit. The chain is Succinate--CoA ligase [ADP-forming] subunit beta from Nitrobacter hamburgensis (strain DSM 10229 / NCIMB 13809 / X14).